The chain runs to 145 residues: MIALIQRVTQANVVVKNEVVGEIGHGLLVLLGVEKGDDQQKAKRLCEKVIGYRIFSDEQDKMNLNVQQIGGSLLVVSQFTLAADTQKGMRPSFSGGAAPDKADELYRYFVEQCRQSGVKTEIGRFAADMKVSLTNDGPVTFWLQV.

Positions 137 to 138 (GP) match the Gly-cisPro motif, important for rejection of L-amino acids motif.

The protein belongs to the DTD family. As to quaternary structure, homodimer.

The protein localises to the cytoplasm. It carries out the reaction glycyl-tRNA(Ala) + H2O = tRNA(Ala) + glycine + H(+). The enzyme catalyses a D-aminoacyl-tRNA + H2O = a tRNA + a D-alpha-amino acid + H(+). Functionally, an aminoacyl-tRNA editing enzyme that deacylates mischarged D-aminoacyl-tRNAs. Also deacylates mischarged glycyl-tRNA(Ala), protecting cells against glycine mischarging by AlaRS. Acts via tRNA-based rather than protein-based catalysis; rejects L-amino acids rather than detecting D-amino acids in the active site. By recycling D-aminoacyl-tRNA to D-amino acids and free tRNA molecules, this enzyme counteracts the toxicity associated with the formation of D-aminoacyl-tRNA entities in vivo and helps enforce protein L-homochirality. The sequence is that of D-aminoacyl-tRNA deacylase from Photorhabdus laumondii subsp. laumondii (strain DSM 15139 / CIP 105565 / TT01) (Photorhabdus luminescens subsp. laumondii).